The chain runs to 265 residues: Tryptophan synthase alpha chain (265 aa).

Residues E48 and D59 each act as proton acceptor in the active site.

The protein belongs to the TrpA family. In terms of assembly, tetramer of two alpha and two beta chains.

It carries out the reaction (1S,2R)-1-C-(indol-3-yl)glycerol 3-phosphate + L-serine = D-glyceraldehyde 3-phosphate + L-tryptophan + H2O. The protein operates within amino-acid biosynthesis; L-tryptophan biosynthesis; L-tryptophan from chorismate: step 5/5. Functionally, the alpha subunit is responsible for the aldol cleavage of indoleglycerol phosphate to indole and glyceraldehyde 3-phosphate. This is Tryptophan synthase alpha chain from Ruthia magnifica subsp. Calyptogena magnifica.